The sequence spans 390 residues: Succinyl-diaminopimelate desuccinylase 1 (390 aa).

His76 is a binding site for Zn(2+). Asp78 is a catalytic residue. Zn(2+) is bound at residue Asp109. Glu143 (proton acceptor) is an active-site residue. Glu144, Glu172, and His363 together coordinate Zn(2+).

This sequence belongs to the peptidase M20A family. DapE subfamily. Homodimer. Zn(2+) is required as a cofactor. Requires Co(2+) as cofactor.

It catalyses the reaction N-succinyl-(2S,6S)-2,6-diaminopimelate + H2O = (2S,6S)-2,6-diaminopimelate + succinate. It functions in the pathway amino-acid biosynthesis; L-lysine biosynthesis via DAP pathway; LL-2,6-diaminopimelate from (S)-tetrahydrodipicolinate (succinylase route): step 3/3. In terms of biological role, catalyzes the hydrolysis of N-succinyl-L,L-diaminopimelic acid (SDAP), forming succinate and LL-2,6-diaminopimelate (DAP), an intermediate involved in the bacterial biosynthesis of lysine and meso-diaminopimelic acid, an essential component of bacterial cell walls. This Alteromonas mediterranea (strain DSM 17117 / CIP 110805 / LMG 28347 / Deep ecotype) protein is Succinyl-diaminopimelate desuccinylase 1.